The chain runs to 365 residues: MFEINPVNNRIQDLTERSDVLRGYLCYDAKKERLEEVNAELEQPDVWNEPERAQALGKERSSLEAVVDTLDQMKQGLEDVSGLLELAVEADDEETFNEAVAELDALEEKLAQLEFRRMFSGEYDSADCYLDIQAGSGGTEAQDWASMLERMYLRWAESRGFKTEIIEESEGEVAGIKSVTIKISGDYAYGWLRTETGVHRLVRKSPFDSGGRRHTSFSSAFVYPEVDDDIDIEINPADLRIDVYRASGAGGQHVNRTESAVRITHIPTGIVTQCQNDRSQHKNKDQAMKQMKAKLYELEMQKKNAEKQAMEDNKSDIGWGSQIRSYVLDDSRIKDLRTGVETRNTQAVLDGSLDQFIEASLKAGL.

Gln-252 is subject to N5-methylglutamine.

This sequence belongs to the prokaryotic/mitochondrial release factor family. Methylated by PrmC. Methylation increases the termination efficiency of RF2.

The protein resides in the cytoplasm. In terms of biological role, peptide chain release factor 2 directs the termination of translation in response to the peptide chain termination codons UGA and UAA. The polypeptide is Peptide chain release factor 2 (Escherichia coli O9:H4 (strain HS)).